Here is a 197-residue protein sequence, read N- to C-terminus: dITP/XTP pyrophosphatase (197 aa).

Residue 10 to 15 (TKNQGK) coordinates substrate. Residue D70 is the Proton acceptor of the active site. A Mg(2+)-binding site is contributed by D70. Substrate contacts are provided by residues S71, 151–154 (FGYD), K173, and 178–179 (HR).

Belongs to the HAM1 NTPase family. Homodimer. It depends on Mg(2+) as a cofactor.

It catalyses the reaction XTP + H2O = XMP + diphosphate + H(+). It carries out the reaction dITP + H2O = dIMP + diphosphate + H(+). The catalysed reaction is ITP + H2O = IMP + diphosphate + H(+). Its function is as follows. Pyrophosphatase that catalyzes the hydrolysis of nucleoside triphosphates to their monophosphate derivatives, with a high preference for the non-canonical purine nucleotides XTP (xanthosine triphosphate), dITP (deoxyinosine triphosphate) and ITP. Seems to function as a house-cleaning enzyme that removes non-canonical purine nucleotides from the nucleotide pool, thus preventing their incorporation into DNA/RNA and avoiding chromosomal lesions. The chain is dITP/XTP pyrophosphatase from Symbiobacterium thermophilum (strain DSM 24528 / JCM 14929 / IAM 14863 / T).